The following is a 481-amino-acid chain: UDP-glycosyltransferase 72E3 (481 aa).

The active-site Proton acceptor is His-18. His-18 is a binding site for an anthocyanidin. Catalysis depends on Asp-111, which acts as the Charge relay. UDP-alpha-D-glucose contacts are provided by Ala-346, Gln-348, His-363, Trp-366, Ser-368, and Glu-371. Ala-386 provides a ligand contact to an anthocyanidin. UDP-alpha-D-glucose is bound by residues Glu-387 and Gln-388.

This sequence belongs to the UDP-glycosyltransferase family. Expressed in seedlings and roots, and at lower levels in flowers and siliques.

The catalysed reaction is (E)-4-coumarate + UDP-alpha-D-glucose = 4-O-(beta-D-glucosyl)-trans-4-coumarate + UDP + H(+). The enzyme catalyses (E)-sinapyl alcohol + UDP-alpha-D-glucose = 4-O-(beta-D-glucosyl)-trans-4-sinapoyl alcohol + UDP + H(+). It carries out the reaction (E)-coniferol + UDP-alpha-D-glucose = 4-O-(beta-D-glucosyl)-(E)-coniferol + UDP + H(+). It catalyses the reaction (E)-sinapate + UDP-alpha-D-glucose = 4-O-(beta-D-glucosyl)-trans-sinapate + UDP + H(+). The catalysed reaction is (E)-coniferaldehyde + UDP-alpha-D-glucose = 4-O-(beta-D-glucosyl)-4-(E)-coniferyl aldehyde + UDP + H(+). The enzyme catalyses (E)-sinapaldehyde + UDP-alpha-D-glucose = 4-O-(beta-D-glucosyl)-4-trans-sinapoyl aldehyde + UDP + H(+). Functionally, involved in the O-glucosylation of monolignols (alcohol monomers of lignin). Glucosylates coniferyl alcohol to form coniferyl alcohol 4-O-glucoside. Glucosylates sinapyl alcohol to form sinapyl alcohol 4-O-glucoside. Possesses low activity with sinapate as substrate. This is UDP-glycosyltransferase 72E3 from Arabidopsis thaliana (Mouse-ear cress).